The following is a 147-amino-acid chain: 3-dehydroquinate dehydratase (147 aa).

The active-site Proton acceptor is tyrosine 24. Asparagine 75, histidine 81, and aspartate 88 together coordinate substrate. The active-site Proton donor is histidine 101. Residues 102 to 103 (LS) and arginine 112 each bind substrate.

Belongs to the type-II 3-dehydroquinase family. Homododecamer.

It catalyses the reaction 3-dehydroquinate = 3-dehydroshikimate + H2O. The protein operates within metabolic intermediate biosynthesis; chorismate biosynthesis; chorismate from D-erythrose 4-phosphate and phosphoenolpyruvate: step 3/7. Its function is as follows. Catalyzes a trans-dehydration via an enolate intermediate. This Caulobacter sp. (strain K31) protein is 3-dehydroquinate dehydratase.